The primary structure comprises 506 residues: 2-isopropylmalate synthase (506 aa).

The 263-residue stretch at 4-266 folds into the Pyruvate carboxyltransferase domain; it reads ILFMDTTLRD…EPSMTLKEIK (263 aa). Aspartate 13, histidine 201, histidine 203, and asparagine 237 together coordinate Mn(2+). The segment at 390 to 506 is regulatory domain; it reads NITQLQVHFV…KLKSFIQLVK (117 aa).

The protein belongs to the alpha-IPM synthase/homocitrate synthase family. LeuA type 1 subfamily. Homodimer. Requires Mn(2+) as cofactor.

It is found in the cytoplasm. The enzyme catalyses 3-methyl-2-oxobutanoate + acetyl-CoA + H2O = (2S)-2-isopropylmalate + CoA + H(+). It participates in amino-acid biosynthesis; L-leucine biosynthesis; L-leucine from 3-methyl-2-oxobutanoate: step 1/4. In terms of biological role, catalyzes the condensation of the acetyl group of acetyl-CoA with 3-methyl-2-oxobutanoate (2-ketoisovalerate) to form 3-carboxy-3-hydroxy-4-methylpentanoate (2-isopropylmalate). The protein is 2-isopropylmalate synthase of Bacillus cereus (strain ATCC 10987 / NRS 248).